The sequence spans 313 residues: MMYDLFMFVLNFLLLIICVLISVAFLTLMERKVLGYIHIRKGPNKVGFLGIPQPFSDAIKLFCKEQPIPFMSNYFLYYFSPVFNLMLSLLIWVIFPYLTYMCSFPYGFYFLCCTSLSVYTFMIAGWSSNSNYALLGSLRSVAQTISYEVSLALILLSLIILIGSFNMLYFMNFQLYCWFIVFSFPLALSFFGSSLAETNRTPFDFAEGESELVSGFNIEYSTGGFTLIFLAEYSSIIFMSMLFSLIFLGGDFYSFYFFFKLSLVSFFFVWVRGTLPRFRYDKLMYLAWKSYLPLSLNFLFFFIGLSVMFFSII.

Transmembrane regions (helical) follow at residues 5–25, 75–95, 104–124, 151–171, 175–195, 227–247, 251–271, and 293–313; these read LFMF…SVAF, FLYY…WVIF, FPYG…FMIA, LALI…LYFM, LYCW…GSSL, LIFL…SLIF, DFYS…FVWV, and PLSL…FSII.

The protein belongs to the complex I subunit 1 family.

It localises to the mitochondrion inner membrane. The catalysed reaction is a ubiquinone + NADH + 5 H(+)(in) = a ubiquinol + NAD(+) + 4 H(+)(out). In terms of biological role, core subunit of the mitochondrial membrane respiratory chain NADH dehydrogenase (Complex I) that is believed to belong to the minimal assembly required for catalysis. Complex I functions in the transfer of electrons from NADH to the respiratory chain. The immediate electron acceptor for the enzyme is believed to be ubiquinone. The polypeptide is NADH-ubiquinone oxidoreductase chain 1 (ND1) (Locusta migratoria (Migratory locust)).